The sequence spans 436 residues: GTPase Der (436 aa).

EngA-type G domains lie at 4-167 and 176-351; these read PVVA…PKDH and IKFC…DNHA. GTP is bound by residues 10–17, 57–61, 119–122, 182–189, 229–233, and 294–297; these read GRPNVGKS, DTGGI, NKID, DTAGM, and NKWD. One can recognise a KH-like domain in the interval 352-436; it reads MRVQTNVLNE…PIKIIARPRK (85 aa).

The protein belongs to the TRAFAC class TrmE-Era-EngA-EngB-Septin-like GTPase superfamily. EngA (Der) GTPase family. As to quaternary structure, associates with the 50S ribosomal subunit.

Its function is as follows. GTPase that plays an essential role in the late steps of ribosome biogenesis. The sequence is that of GTPase Der from Geobacillus thermodenitrificans (strain NG80-2).